Consider the following 342-residue polypeptide: Holliday junction branch migration complex subunit RuvB (342 aa).

The interval 1–21 (MSVEHSPVDPSAEPPEKAEEA) is disordered. The tract at residues 1–184 (MSVEHSPVDP…FGFTAQLDYY (184 aa)) is large ATPase domain (RuvB-L). Residues Leu-23, Arg-24, Gly-65, Lys-68, Thr-69, Thr-70, 131–133 (EDF), Arg-174, Tyr-184, and Arg-221 contribute to the ATP site. A Mg(2+)-binding site is contributed by Thr-69. The segment at 185-255 (EVADLERIVT…GAETALDLYE (71 aa)) is small ATPAse domain (RuvB-S). The head domain (RuvB-H) stretch occupies residues 258–342 (PLGLDRLDRA…PPDSSGEGLF (85 aa)). DNA-binding residues include Arg-313 and Arg-318.

It belongs to the RuvB family. Homohexamer. Forms an RuvA(8)-RuvB(12)-Holliday junction (HJ) complex. HJ DNA is sandwiched between 2 RuvA tetramers; dsDNA enters through RuvA and exits via RuvB. An RuvB hexamer assembles on each DNA strand where it exits the tetramer. Each RuvB hexamer is contacted by two RuvA subunits (via domain III) on 2 adjacent RuvB subunits; this complex drives branch migration. In the full resolvosome a probable DNA-RuvA(4)-RuvB(12)-RuvC(2) complex forms which resolves the HJ.

The protein localises to the cytoplasm. The catalysed reaction is ATP + H2O = ADP + phosphate + H(+). In terms of biological role, the RuvA-RuvB-RuvC complex processes Holliday junction (HJ) DNA during genetic recombination and DNA repair, while the RuvA-RuvB complex plays an important role in the rescue of blocked DNA replication forks via replication fork reversal (RFR). RuvA specifically binds to HJ cruciform DNA, conferring on it an open structure. The RuvB hexamer acts as an ATP-dependent pump, pulling dsDNA into and through the RuvAB complex. RuvB forms 2 homohexamers on either side of HJ DNA bound by 1 or 2 RuvA tetramers; 4 subunits per hexamer contact DNA at a time. Coordinated motions by a converter formed by DNA-disengaged RuvB subunits stimulates ATP hydrolysis and nucleotide exchange. Immobilization of the converter enables RuvB to convert the ATP-contained energy into a lever motion, pulling 2 nucleotides of DNA out of the RuvA tetramer per ATP hydrolyzed, thus driving DNA branch migration. The RuvB motors rotate together with the DNA substrate, which together with the progressing nucleotide cycle form the mechanistic basis for DNA recombination by continuous HJ branch migration. Branch migration allows RuvC to scan DNA until it finds its consensus sequence, where it cleaves and resolves cruciform DNA. This chain is Holliday junction branch migration complex subunit RuvB, found in Cutibacterium acnes (strain DSM 16379 / KPA171202) (Propionibacterium acnes).